We begin with the raw amino-acid sequence, 341 residues long: L-threonine 3-dehydrogenase (341 aa).

Cysteine 38 lines the Zn(2+) pocket. Residues threonine 40 and histidine 43 each act as charge relay system in the active site. Zn(2+) contacts are provided by histidine 63, glutamate 64, cysteine 93, cysteine 96, cysteine 99, and cysteine 107. Residues isoleucine 175, aspartate 195, arginine 200, 262–264 (LGI), and 286–287 (IY) contribute to the NAD(+) site.

It belongs to the zinc-containing alcohol dehydrogenase family. In terms of assembly, homotetramer. Requires Zn(2+) as cofactor.

The protein resides in the cytoplasm. The catalysed reaction is L-threonine + NAD(+) = (2S)-2-amino-3-oxobutanoate + NADH + H(+). The protein operates within amino-acid degradation; L-threonine degradation via oxydo-reductase pathway; glycine from L-threonine: step 1/2. Its function is as follows. Catalyzes the NAD(+)-dependent oxidation of L-threonine to 2-amino-3-ketobutyrate. The chain is L-threonine 3-dehydrogenase from Escherichia coli O127:H6 (strain E2348/69 / EPEC).